The following is a 679-amino-acid chain: Protein polyglycylase TTLL10 (679 aa).

Residues 1 to 15 (MPLHPPARRPHGHRR) are compositionally biased toward basic residues. Disordered regions lie at residues 1–33 (MPLH…GRLS), 49–77 (GHRA…LMPA), and 96–124 (VSFK…RMGS). Residues 18–30 (SEAQTEATTQDTG) are compositionally biased toward polar residues. Over residues 96–110 (VSFKRPKRSRTHQSH) the composition is skewed to basic residues. Positions 172–543 (QGPFFYIGGT…TCQKSLHSQK (372 aa)) constitute a TTL domain. ATP contacts are provided by residues Lys-304, 310–311 (QG), 353–356 (QRYV), 366–368 (KFD), and 409–410 (TN). Residue Gln-310 participates in a protein binding. The Mg(2+) site is built by Asp-489, Glu-502, and Asn-504. Residues 605 to 679 (DRPAARKSMS…EQRSTSHRGS (75 aa)) are disordered.

Requires Mg(2+) as cofactor.

The protein resides in the cytoplasm. It is found in the cytoskeleton. It localises to the cell projection. The protein localises to the cilium. Its subcellular location is the cilium axoneme. It catalyses the reaction (glycyl)(n)-glycyl-L-glutamyl-[protein] + glycine + ATP = (glycyl)(n+1)-glycyl-L-glutamyl-[protein] + ADP + phosphate + H(+). Polyglycylase which modifies both tubulin and non-tubulin proteins, generating polyglycine side chains of variable lengths on the gamma-carboxyl groups of specific glutamate residues of target proteins. Involved in the elongation step rather than the initiation step of the polyglycylation reaction. Polyglycylates alpha-tubulin and beta-tubulin. Polyglycylates non-tubulin proteins such as nucleosome assembly protein NAP1. The polypeptide is Protein polyglycylase TTLL10 (Rattus norvegicus (Rat)).